We begin with the raw amino-acid sequence, 325 residues long: uncharacterized protein (325 aa).

Residues 67-87 (WIPFFLLFSSVVVLGGLWWLG) form a helical membrane-spanning segment.

The protein localises to the membrane. This is an uncharacterized protein from Synechocystis sp. (strain ATCC 27184 / PCC 6803 / Kazusa).